We begin with the raw amino-acid sequence, 528 residues long: Glutamyl-tRNA(Gln) amidotransferase subunit B, mitochondrial (528 aa).

The transit peptide at 1–21 (MSWRLSFRTNLLIYNVRRRNY) directs the protein to the mitochondrion.

This sequence belongs to the GatB/GatE family. GatB subfamily. In terms of assembly, subunit of the heterotrimeric GatCAB amidotransferase (AdT) complex, composed of A, B and C subunits.

It is found in the mitochondrion. The enzyme catalyses L-glutamyl-tRNA(Gln) + L-glutamine + ATP + H2O = L-glutaminyl-tRNA(Gln) + L-glutamate + ADP + phosphate + H(+). Functionally, allows the formation of correctly charged Gln-tRNA(Gln) through the transamidation of misacylated Glu-tRNA(Gln) in the mitochondria. The reaction takes place in the presence of glutamine and ATP through an activated gamma-phospho-Glu-tRNA(Gln). This chain is Glutamyl-tRNA(Gln) amidotransferase subunit B, mitochondrial, found in Aedes aegypti (Yellowfever mosquito).